A 626-amino-acid chain; its full sequence is Dynein, cytoplasmic 1, intermediate chain 2a (626 aa).

Residues 20-43 (QIREEKKRKEEERKKKEAELKKDA) show a composition bias toward basic and acidic residues. Disordered regions lie at residues 20-108 (QIRE…RTLH) and 142-197 (KEVV…HELT). Residues 82-99 (TAKSVGSPSEAGSQDSGD) show a composition bias toward polar residues. The span at 160–169 (KDEEDEEEET) shows a compositional bias: acidic residues. The span at 177–197 (ETEKEKPEEKQVEEALPHELT) shows a compositional bias: basic and acidic residues. WD repeat units lie at residues 265 to 314 (SKQR…ATPE), 318 to 358 (HCQS…RTPV), 367 to 408 (AHTH…QPQD), 417 to 457 (SKSV…AGIS), 462 to 507 (GHHG…PLYS), 510 to 550 (DNSD…EVPT), and 556 to 595 (DGSP…AVPR).

The protein belongs to the dynein intermediate chain family. In terms of assembly, homodimer. The cytoplasmic dynein 1 complex consists of two catalytic heavy chains (HCs) and a number of non-catalytic subunits presented by intermediate chains (ICs), light intermediate chains (LICs) and light chains (LCs); the composition seems to vary in respect to the IC, LIC and LC composition. The heavy chain homodimer serves as a scaffold for the probable homodimeric assembly of the respective non-catalytic subunits. The ICs and LICs bind directly to the HC dimer and the LCs assemble on the IC dimer.

Its subcellular location is the cytoplasm. It localises to the cytoskeleton. In terms of biological role, acts as one of several non-catalytic accessory components of the cytoplasmic dynein 1 complex that are thought to be involved in linking dynein to cargos and to adapter proteins that regulate dynein function. Cytoplasmic dynein 1 acts as a motor for the intracellular retrograde motility of vesicles and organelles along microtubules. Plays a role in the development of anterior brain and cartilaginous structures. The polypeptide is Dynein, cytoplasmic 1, intermediate chain 2a (dync1i2a) (Danio rerio (Zebrafish)).